The primary structure comprises 832 residues: Valine--tRNA ligase (832 aa).

Positions 41 to 51 (PNVTGKLHLGH) match the 'HIGH' region motif. Residues 512–516 (KMSKS) carry the 'KMSKS' region motif. Lys-515 provides a ligand contact to ATP. Residues 760-831 (FIEISQEQKQ…QIYLEELKWK (72 aa)) adopt a coiled-coil conformation.

It belongs to the class-I aminoacyl-tRNA synthetase family. ValS type 1 subfamily. In terms of assembly, monomer.

It is found in the cytoplasm. The enzyme catalyses tRNA(Val) + L-valine + ATP = L-valyl-tRNA(Val) + AMP + diphosphate. Its function is as follows. Catalyzes the attachment of valine to tRNA(Val). As ValRS can inadvertently accommodate and process structurally similar amino acids such as threonine, to avoid such errors, it has a 'posttransfer' editing activity that hydrolyzes mischarged Thr-tRNA(Val) in a tRNA-dependent manner. This is Valine--tRNA ligase from Mycoplasmopsis synoviae (strain 53) (Mycoplasma synoviae).